Consider the following 235-residue polypeptide: Ubiquinone biosynthesis O-methyltransferase (235 aa).

Positions 39, 59, 80, and 124 each coordinate S-adenosyl-L-methionine.

Belongs to the methyltransferase superfamily. UbiG/COQ3 family.

The enzyme catalyses a 3-demethylubiquinol + S-adenosyl-L-methionine = a ubiquinol + S-adenosyl-L-homocysteine + H(+). The catalysed reaction is a 3-(all-trans-polyprenyl)benzene-1,2-diol + S-adenosyl-L-methionine = a 2-methoxy-6-(all-trans-polyprenyl)phenol + S-adenosyl-L-homocysteine + H(+). Its pathway is cofactor biosynthesis; ubiquinone biosynthesis. Functionally, O-methyltransferase that catalyzes the 2 O-methylation steps in the ubiquinone biosynthetic pathway. The protein is Ubiquinone biosynthesis O-methyltransferase of Vibrio vulnificus (strain CMCP6).